The sequence spans 221 residues: MSDENLLTSLDTYLASGIHIGTQQKTEDMKRFIYRVRSDGLYVLDVRKTDERLRLAAKFLSNYEPQDIMAVTRRVYSVGPLKKFGETTGINTVAGRFVPGTLTNPAAKKFAEPEVMFLSDPRVDKQALKEAIEIGIPIVSMCDTEHLTAHLDFIIPTNNKGRKSVSLMYFLIAREYLKNRGIIGEEVPFSYDDFLEKAMGAKVKMPQQNQRGRPQRRFQRR.

A disordered region spans residues 202–221 (KVKMPQQNQRGRPQRRFQRR).

Belongs to the universal ribosomal protein uS2 family.

This Methanococcus vannielii (strain ATCC 35089 / DSM 1224 / JCM 13029 / OCM 148 / SB) protein is Small ribosomal subunit protein uS2.